The primary structure comprises 369 residues: MAPPQQARVLRCCCCSLFQAHQVKKSLKWTCKACGKKQSFLQAYGEGSGADCRRHVQKLNLLQGQISEMSLRSLGESISANEEENVGPWQAARASPQETLQPSKNRWLKYLERDSKELGLKGGGVCFNSQPSSETEKPDPPFSTGLPRKRKWNQSTVQPLCGPHVQDSRNCEVTLKSLKARPLHPTWGARSSPDCSTWDLPCISEELPPSFTQDRAGLAGKGRESSREDLDTMELVPRGEPPCPAQQVRTMSKWEQCLGNSSHLDTEPLTPLQRGLRPIQAAQAEQGAPRAQTPREGGLCRLPGARQSPQTTHTPMPGPKWLCGRIPEQSQGTGPWAEGVPLVKGMQARSSLMRLCDLFKTGEDFDDDL.

The residue at position 115 (Ser115) is a Phosphoserine. Disordered regions lie at residues 122-150, 209-245, and 282-317; these read GGGVCFNSQPSSETEKPDPPFSTGLPRKR, PSFTQDRAGLAGKGRESSREDLDTMELVPRGEPPCPA, and AQAEQGAPRAQTPREGGLCRLPGARQSPQTTHTPMP. The Nuclear localization signal (NLS) signature appears at 148–151; the sequence is RKRK. Over residues 221 to 230 the composition is skewed to basic and acidic residues; the sequence is KGRESSREDL. Residues 223–259 are necessary for the association with the MRN complex; that stretch reads RESSREDLDTMELVPRGEPPCPAQQVRTMSKWEQCLG.

This sequence belongs to the MRNIP family. As to quaternary structure, associates with the MRE11-RAD50-NBN (MRN) damage-sensing complex; this association is constitutive. Interacts with MRE11. Interacts with NBN. Interacts with RAD50. Phosphorylated; phosphorylation is constitutive and occurs in the absence of any DNA-damaging stimulus. Phosphorylation on Ser-115 is necessary for its nuclear retention.

The protein localises to the nucleus. The protein resides in the nucleoplasm. Its function is as follows. Plays a role in the cellular response to DNA damage and the maintenance of genome stability through its association with the MRN damage-sensing complex. Promotes chromatin loading and activity of the MRN complex to facilitate subsequent ATM-mediated DNA damage response signaling and DNA repair. This Bos taurus (Bovine) protein is MRN complex-interacting protein.